The sequence spans 721 residues: Pentatricopeptide repeat-containing protein At3g49710 (721 aa).

14 PPR repeats span residues Ser-42–Pro-72, Asn-73–Pro-103, Asp-104–Val-138, Asp-139–Phe-169, Tyr-172–Leu-202, Asp-204–Ile-238, Asp-239–Gln-273, Asn-274–Pro-307, Asp-308–Pro-343, Asp-344–Ser-378, Arg-380–Leu-410, Asn-411–Pro-445, Asn-446–Thr-476, and Glu-482–Lys-512. Residues Ala-517–Lys-592 are type E motif. Residues Lys-593–Lys-623 are type E(+) motif. The segment at Lys-624–Trp-721 is type DYW motif.

This sequence belongs to the PPR family. PCMP-H subfamily.

In Arabidopsis thaliana (Mouse-ear cress), this protein is Pentatricopeptide repeat-containing protein At3g49710 (PCMP-H79).